A 1134-amino-acid polypeptide reads, in one-letter code: Vinculin (1134 aa).

The N-terminal globular head stretch occupies residues 1 to 835 (MPVFHTRTIE…GAVAKVREAF (835 aa)). At Ser97 the chain carries Phosphoserine. The tract at residues 168–208 (MTKMAKMIDERQQELTHQEHRVMLVNSMNTVKELLPVLISA) is talin-interaction. Residue Lys173 is modified to N6-acetyllysine. 3 consecutive repeat copies span residues 259 to 369 (ASKD…KVEN), 370 to 479 (AARK…KTNR), and 480 to 589 (AVAN…RMQE). Positions 259–589 (ASKDTEAMKR…LKDLKARMQE (331 aa)) are 3 X 112 AA tandem repeats. Residues Ser260, Ser272, Ser275, Ser288, Ser290, Ser346, and Ser434 each carry the phosphoserine modification. An N6-acetyllysine modification is found at Lys496. Position 537 is a phosphotyrosine (Tyr537). Residues Ser574, Ser579, and Ser600 each carry the phosphoserine modification. Phosphothreonine is present on residues Thr604 and Thr672. Ser721 carries the phosphoserine modification. The tract at residues 741–764 (MANIQPQMLVAGATSIARRANRIL) is interaction with ACTN4. A phosphoserine mark is found at Ser795 and Ser809. Tyr822 bears the Phosphotyrosine mark. The interval 836–878 (QPQEPDFPPPPPDLEQLRLTDELAPPKPPLPEGEVPPPRPPPP) is linker (Pro-rich). A disordered region spans residues 857 to 887 (ELAPPKPPLPEGEVPPPRPPPPEEKDEEFPE). Pro residues predominate over residues 860–876 (PPKPPLPEGEVPPPRPP). Residues 879–1134 (EEKDEEFPEQ…RWVRKTPWYQ (256 aa)) form a C-terminal tail region. Facilitates phospholipid membrane insertion stretches follow at residues 1003–1046 (RLVR…KRIR) and 1120–1134 (AGFT…PWYQ). The residue at position 1133 (Tyr1133) is a Phosphotyrosine; by SRC-type Tyr-kinases.

This sequence belongs to the vinculin/alpha-catenin family. Exhibits self-association properties. Part of a complex composed of THSD1, PTK2/FAK1, TLN1 and VCL. Interacts with APBB1IP and NRAP. Interacts with TLN1. Interacts with CTNNB1 and this interaction is necessary for its localization to the cell-cell junctions and for its function in regulating cell surface expression of E-cadherin. Interacts with SYNM. Interacts with SORBS1. Interacts with CTNNA1. Binds to ACTN4; this interaction triggers conformational changes. Interacts with FLII. In terms of assembly, (Microbial infection) Interacts via its globular head domain with the central portion of S.flexneri IcsA (also called VirG). Post-translationally, phosphorylated; on serines, threonines and tyrosines. Phosphorylation on Tyr-1133 in activated platelets affects head-tail interactions and cell spreading but has no effect on actin binding nor on localization to focal adhesion plaques. In terms of processing, acetylated; mainly by myristic acid but also by a small amount of palmitic acid. In terms of tissue distribution, metavinculin is muscle-specific.

It is found in the cell membrane. Its subcellular location is the cell junction. The protein localises to the adherens junction. The protein resides in the focal adhesion. It localises to the cytoplasm. It is found in the cytoskeleton. Its subcellular location is the sarcolemma. The protein localises to the cell projection. The protein resides in the podosome. Actin filament (F-actin)-binding protein involved in cell-matrix adhesion and cell-cell adhesion. Regulates cell-surface E-cadherin expression and potentiates mechanosensing by the E-cadherin complex. May also play important roles in cell morphology and locomotion. The protein is Vinculin (VCL) of Homo sapiens (Human).